The sequence spans 377 residues: Succinyl-diaminopimelate desuccinylase (377 aa).

His-67 contacts Zn(2+). The active site involves Asp-69. Residue Asp-100 participates in Zn(2+) binding. The Proton acceptor role is filled by Glu-134. Zn(2+) is bound by residues Glu-135, Glu-163, and His-349.

Belongs to the peptidase M20A family. DapE subfamily. As to quaternary structure, homodimer. The cofactor is Zn(2+). Requires Co(2+) as cofactor.

The catalysed reaction is N-succinyl-(2S,6S)-2,6-diaminopimelate + H2O = (2S,6S)-2,6-diaminopimelate + succinate. It functions in the pathway amino-acid biosynthesis; L-lysine biosynthesis via DAP pathway; LL-2,6-diaminopimelate from (S)-tetrahydrodipicolinate (succinylase route): step 3/3. Catalyzes the hydrolysis of N-succinyl-L,L-diaminopimelic acid (SDAP), forming succinate and LL-2,6-diaminopimelate (DAP), an intermediate involved in the bacterial biosynthesis of lysine and meso-diaminopimelic acid, an essential component of bacterial cell walls. This chain is Succinyl-diaminopimelate desuccinylase, found in Glaesserella parasuis serovar 5 (strain SH0165) (Haemophilus parasuis).